Here is a 381-residue protein sequence, read N- to C-terminus: 1-deoxy-D-xylulose 5-phosphate reductoisomerase (381 aa).

Thr10, Gly11, Ser12, Ile13, and Asn120 together coordinate NADPH. Lys121 is a 1-deoxy-D-xylulose 5-phosphate binding site. Position 122 (Glu122) interacts with NADPH. Asp146 is a binding site for Mn(2+). The 1-deoxy-D-xylulose 5-phosphate site is built by Ser147, Glu148, Ser172, and His195. Residue Glu148 coordinates Mn(2+). Gly201 serves as a coordination point for NADPH. 4 residues coordinate 1-deoxy-D-xylulose 5-phosphate: Ser208, Asn213, Lys214, and Glu217. Glu217 contributes to the Mn(2+) binding site.

It belongs to the DXR family. It depends on Mg(2+) as a cofactor. Mn(2+) is required as a cofactor.

The enzyme catalyses 2-C-methyl-D-erythritol 4-phosphate + NADP(+) = 1-deoxy-D-xylulose 5-phosphate + NADPH + H(+). It functions in the pathway isoprenoid biosynthesis; isopentenyl diphosphate biosynthesis via DXP pathway; isopentenyl diphosphate from 1-deoxy-D-xylulose 5-phosphate: step 1/6. Catalyzes the NADPH-dependent rearrangement and reduction of 1-deoxy-D-xylulose-5-phosphate (DXP) to 2-C-methyl-D-erythritol 4-phosphate (MEP). The sequence is that of 1-deoxy-D-xylulose 5-phosphate reductoisomerase from Thermodesulfovibrio yellowstonii (strain ATCC 51303 / DSM 11347 / YP87).